The primary structure comprises 115 residues: MLSQTIKSGDWKGEKHVPVIEYEKEGDLVKVEVSVGKEIPHPNTPEHHIAWIQLWFHPEDGAFPILVGKVEFSNHTDPLTEPRAVFFFRTQKKGKLYALSYCNIHGLWENEVTLE.

Residues Glu14, His16, His41, His47, Cys102, and His105 each contribute to the Fe cation site.

Belongs to the desulfoferrodoxin family. Homotetramer. Fe cation is required as a cofactor.

It carries out the reaction reduced [rubredoxin] + superoxide + 2 H(+) = oxidized [rubredoxin] + H2O2. In terms of biological role, uses electrons from reduced NADP, by way of rubredoxin and an oxidoreductase, to catalyze the reduction of superoxide to hydrogen peroxide. This Thermococcus kodakarensis (strain ATCC BAA-918 / JCM 12380 / KOD1) (Pyrococcus kodakaraensis (strain KOD1)) protein is Superoxide reductase (sorA).